The following is a 301-amino-acid chain: Pantothenate synthetase (301 aa).

30–37 (MGNLHEGH) provides a ligand contact to ATP. The Proton donor role is filled by His37. Gln61 lines the (R)-pantoate pocket. Residue Gln61 participates in beta-alanine binding. Residue 149 to 152 (GEKD) participates in ATP binding. Gln155 lines the (R)-pantoate pocket. ATP-binding positions include Val178 and 186–189 (MSSR).

The protein belongs to the pantothenate synthetase family. As to quaternary structure, homodimer.

The protein localises to the cytoplasm. It carries out the reaction (R)-pantoate + beta-alanine + ATP = (R)-pantothenate + AMP + diphosphate + H(+). It participates in cofactor biosynthesis; (R)-pantothenate biosynthesis; (R)-pantothenate from (R)-pantoate and beta-alanine: step 1/1. Catalyzes the condensation of pantoate with beta-alanine in an ATP-dependent reaction via a pantoyl-adenylate intermediate. In Vibrio vulnificus (strain CMCP6), this protein is Pantothenate synthetase.